A 367-amino-acid chain; its full sequence is Tubulin-like protein CetZ (367 aa).

GTP-binding positions include 11–15, Ser-111, 115–117, Glu-148, Asn-176, and Asn-194; these read QCGNR and GTG.

It belongs to the CetZ family.

Its subcellular location is the cytoplasm. Involved in cell shape control. The protein is Tubulin-like protein CetZ of Methanothrix thermoacetophila (strain DSM 6194 / JCM 14653 / NBRC 101360 / PT) (Methanosaeta thermophila).